The sequence spans 1316 residues: DNA-directed RNA polymerase subunit beta' (1316 aa).

Zn(2+) contacts are provided by cysteine 60, cysteine 62, cysteine 75, and cysteine 78. The Mg(2+) site is built by aspartate 535, aspartate 537, and aspartate 539. Residues cysteine 891, cysteine 968, cysteine 975, and cysteine 978 each coordinate Zn(2+).

This sequence belongs to the RNA polymerase beta' chain family. The RNAP catalytic core consists of 2 alpha, 1 beta, 1 beta' and 1 omega subunit. When a sigma factor is associated with the core the holoenzyme is formed, which can initiate transcription. Mg(2+) is required as a cofactor. Zn(2+) serves as cofactor.

It catalyses the reaction RNA(n) + a ribonucleoside 5'-triphosphate = RNA(n+1) + diphosphate. Its function is as follows. DNA-dependent RNA polymerase catalyzes the transcription of DNA into RNA using the four ribonucleoside triphosphates as substrates. This Mycolicibacterium paratuberculosis (strain ATCC BAA-968 / K-10) (Mycobacterium paratuberculosis) protein is DNA-directed RNA polymerase subunit beta'.